Reading from the N-terminus, the 118-residue chain is MARIAGVNIPDNKHTVISLTYIYGVGRTTAQSICAATGVNPAAKIKDLSDEQIDQLRNEVAKITTEGDLRREINMNIKRLMDLGCYRGLRHRRGLPVRGQRTKTNARTRKGPRKPIRK.

The interval 94 to 118 is disordered; it reads GLPVRGQRTKTNARTRKGPRKPIRK.

It belongs to the universal ribosomal protein uS13 family. Part of the 30S ribosomal subunit. Forms a loose heterodimer with protein S19. Forms two bridges to the 50S subunit in the 70S ribosome.

In terms of biological role, located at the top of the head of the 30S subunit, it contacts several helices of the 16S rRNA. In the 70S ribosome it contacts the 23S rRNA (bridge B1a) and protein L5 of the 50S subunit (bridge B1b), connecting the 2 subunits; these bridges are implicated in subunit movement. Contacts the tRNAs in the A and P-sites. The chain is Small ribosomal subunit protein uS13 from Pseudomonas aeruginosa (strain LESB58).